Consider the following 105-residue polypeptide: MYVIVEINGQQFKAEQGKKLFVHHIQNAESGAVVEFDKVLLVDNNGEVTVGVPTVEGAKVVCEVLSPLVKGDKVLVFHKKRRKGYRKLNGHRQQFTEVSIKEVIA.

Belongs to the bacterial ribosomal protein bL21 family. Part of the 50S ribosomal subunit. Contacts protein L20.

This protein binds to 23S rRNA in the presence of protein L20. In Parabacteroides distasonis (strain ATCC 8503 / DSM 20701 / CIP 104284 / JCM 5825 / NCTC 11152), this protein is Large ribosomal subunit protein bL21.